The primary structure comprises 186 residues: Peptide deformylase (186 aa).

Fe cation contacts are provided by cysteine 113 and histidine 156. The active site involves glutamate 157. Residue histidine 160 coordinates Fe cation.

It belongs to the polypeptide deformylase family. The cofactor is Fe(2+).

The catalysed reaction is N-terminal N-formyl-L-methionyl-[peptide] + H2O = N-terminal L-methionyl-[peptide] + formate. Functionally, removes the formyl group from the N-terminal Met of newly synthesized proteins. Requires at least a dipeptide for an efficient rate of reaction. N-terminal L-methionine is a prerequisite for activity but the enzyme has broad specificity at other positions. This Limosilactobacillus reuteri (strain DSM 20016) (Lactobacillus reuteri) protein is Peptide deformylase.